Reading from the N-terminus, the 258-residue chain is Global transcriptional regulator CodY (258 aa).

The segment at 1 to 156 (MSTLLSKTRR…SATIVGMELL (156 aa)) is GAF domain. Positions 204 to 223 (ASKIADKVGITRSVIVNALR) form a DNA-binding region, H-T-H motif.

The protein belongs to the CodY family.

It is found in the cytoplasm. Its function is as follows. DNA-binding global transcriptional regulator which is involved in the adaptive response to starvation and acts by directly or indirectly controlling the expression of numerous genes in response to nutrient availability. During rapid exponential growth, CodY is highly active and represses genes whose products allow adaptation to nutrient depletion. This chain is Global transcriptional regulator CodY, found in Clostridium perfringens (strain SM101 / Type A).